The primary structure comprises 316 residues: Pantothenate kinase (316 aa).

ATP is bound at residue 95–102; it reads GSVAVGKS.

The protein belongs to the prokaryotic pantothenate kinase family.

It is found in the cytoplasm. It catalyses the reaction (R)-pantothenate + ATP = (R)-4'-phosphopantothenate + ADP + H(+). It functions in the pathway cofactor biosynthesis; coenzyme A biosynthesis; CoA from (R)-pantothenate: step 1/5. The polypeptide is Pantothenate kinase (Yersinia enterocolitica serotype O:8 / biotype 1B (strain NCTC 13174 / 8081)).